A 328-amino-acid chain; its full sequence is P2Y purinoceptor 6 (328 aa).

The Extracellular segment spans residues 1–27; sequence MEWDNGTGQALGLPPTTCVYRENFKQL. Residue N5 is glycosylated (N-linked (GlcNAc...) asparagine). The chain crosses the membrane as a helical span at residues 28–48; that stretch reads LLPPVYSAVLAAGLPLNICVI. Residues 49-62 lie on the Cytoplasmic side of the membrane; that stretch reads TQICTSRRALTRTA. A helical transmembrane segment spans residues 63–83; the sequence is VYTLNLALADLLYACSLPLLI. Topologically, residues 84 to 101 are extracellular; the sequence is YNYAQGDHWPFGDFACRL. Cysteines 99 and 177 form a disulfide. A helical membrane pass occupies residues 102 to 122; it reads VRFLFYANLHGSILFLTCISF. Topologically, residues 123-144 are cytoplasmic; sequence QRYLGICHPLAPWHKRGGRRAA. The helical transmembrane segment at 145 to 165 threads the bilayer; the sequence is WLVCVAVWLAVTTQCLPTAIF. Residues 166–194 lie on the Extracellular side of the membrane; the sequence is AATGIQRNRTVCYDLSPPALATHYMPYGM. The helical transmembrane segment at 195 to 215 threads the bilayer; the sequence is ALTVIGFLLPFAALLACYCLL. Residues 216–236 lie on the Cytoplasmic side of the membrane; the sequence is ACRLCRQDGPAEPVAQERRGK. A helical membrane pass occupies residues 237 to 257; the sequence is AARMAVVVAAAFAISFLPFHI. The Extracellular segment spans residues 258-280; the sequence is TKTAYLAVRSTPGVPCTVLEAFA. Residues 281-303 form a helical membrane-spanning segment; that stretch reads AAYKGTRPFASANSVLDPILFYF. Residues 304–328 are Cytoplasmic-facing; sequence TQKKFRRRPHELLQKLTAKWQRQGR.

The protein belongs to the G-protein coupled receptor 1 family.

It is found in the cell membrane. Receptor for extracellular UDP &gt; UTP &gt; ATP. The activity of this receptor is mediated by G proteins which activate a phosphatidylinositol-calcium second messenger system. This chain is P2Y purinoceptor 6 (P2RY6), found in Homo sapiens (Human).